Reading from the N-terminus, the 638-residue chain is 2-isopropylmalate synthase (638 aa).

The 275-residue stretch at 72–346 (PRWCSVDLRD…DPQLDLSNVP (275 aa)) folds into the Pyruvate carboxyltransferase domain. Residues D81, H285, H287, and N321 each contribute to the Mg(2+) site. Residues 488–638 (VEQSGMTAAG…SAINRSQRQR (151 aa)) are regulatory domain.

It belongs to the alpha-IPM synthase/homocitrate synthase family. LeuA type 2 subfamily. In terms of assembly, homodimer. It depends on Mg(2+) as a cofactor.

The protein resides in the cytoplasm. The catalysed reaction is 3-methyl-2-oxobutanoate + acetyl-CoA + H2O = (2S)-2-isopropylmalate + CoA + H(+). Its pathway is amino-acid biosynthesis; L-leucine biosynthesis; L-leucine from 3-methyl-2-oxobutanoate: step 1/4. Catalyzes the condensation of the acetyl group of acetyl-CoA with 3-methyl-2-oxobutanoate (2-ketoisovalerate) to form 3-carboxy-3-hydroxy-4-methylpentanoate (2-isopropylmalate). This Bifidobacterium longum subsp. infantis (strain ATCC 15697 / DSM 20088 / JCM 1222 / NCTC 11817 / S12) protein is 2-isopropylmalate synthase.